The chain runs to 108 residues: Phosphoribosyl-ATP pyrophosphatase (108 aa).

Belongs to the PRA-PH family.

The protein resides in the cytoplasm. It catalyses the reaction 1-(5-phospho-beta-D-ribosyl)-ATP + H2O = 1-(5-phospho-beta-D-ribosyl)-5'-AMP + diphosphate + H(+). Its pathway is amino-acid biosynthesis; L-histidine biosynthesis; L-histidine from 5-phospho-alpha-D-ribose 1-diphosphate: step 2/9. This chain is Phosphoribosyl-ATP pyrophosphatase, found in Chromobacterium violaceum (strain ATCC 12472 / DSM 30191 / JCM 1249 / CCUG 213 / NBRC 12614 / NCIMB 9131 / NCTC 9757 / MK).